A 624-amino-acid polypeptide reads, in one-letter code: ERAD-associated E3 ubiquitin-protein ligase ASI1 (624 aa).

Residues 1-69 (MNSSTSSENV…SEEIPPTLRS (69 aa)) are Perinuclear space-facing. N-linked (GlcNAc...) asparagine glycosylation is found at Asn-2, Asn-19, and Asn-29. Residues 70 to 90 (VFDTIGFFFSPYAIFCFVIAI) traverse the membrane as a helical segment. The Nuclear portion of the chain corresponds to 91–116 (VLNRFVVFYAVLNNGSRRTLPLWLSN). The helical transmembrane segment at 117–137 (VFHVSAVVVLAMVSLGPLTLG) threads the bilayer. At 138–152 (KDFKILGDPAFAQEK) the chain is on the perinuclear space side. The chain crosses the membrane as a helical span at residues 153-173 (FLLNIFYAFAYSYCVETIFTI). The Nuclear portion of the chain corresponds to 174 to 209 (MRNSSPLEGTDYSLFELSIQFYTMTNNNTKFLDSPD). The helical transmembrane segment at 210–230 (YIIDCSMAILSRILIHLVEIF) threads the bilayer. Residues 231-273 (RLRNYRLLFSTIMNLCHICYLGIRVKQGGWKSLPFSVKFRHFP) are Perinuclear space-facing. Residues 274-294 (KLFSVSIICLSLLIFKLSCLI) traverse the membrane as a helical segment. The Nuclear segment spans residues 295–624 (RWDPFGKSRN…CKVHPVSDSK (330 aa)). Positions 467 to 490 (TSDDEYSEDYEPSEVESLGDSDEE) are disordered. Acidic residues predominate over residues 468-490 (SDDEYSEDYEPSEVESLGDSDEE). An RING-type; atypical zinc finger spans residues 568–608 (CAVCKVNERNTVLWPCRCFAICEDCRISLGLRGFSTCVCCR).

In terms of assembly, component of the Asi complex, which contains ASI1, ASI2 and ASI3. Interacts directly with ASI3. Glycosylation is not required for ASI1 function.

Its subcellular location is the nucleus inner membrane. It catalyses the reaction S-ubiquitinyl-[E2 ubiquitin-conjugating enzyme]-L-cysteine + [acceptor protein]-L-lysine = [E2 ubiquitin-conjugating enzyme]-L-cysteine + N(6)-ubiquitinyl-[acceptor protein]-L-lysine.. In terms of biological role, E3 ubiquitin-protein ligase which transfers ubiquitin to substrates promoting their degradation. Part of the nuclear inner membrane (INM)-specific branch of the ER-associated degradation (ERAD) pathway, required for the elimination of misfolded proteins in the INM, a specialized ER subdomain. Required for ERG11 degradation. Negative regulator of SPS-sensor signaling. Together with ASI2 and ASI3, prevents the unprocessed precursor forms of STP1 and STP2 that escape cytoplasmic anchoring from inducing SPS-sensor-regulated genes in the absence of inducing signals. Controls amino acid permease (AAP) gene expression in response to amino acid availability, a process mediated by the transcription factors STP1 and STP1. The protein is ERAD-associated E3 ubiquitin-protein ligase ASI1 (ASI1) of Saccharomyces cerevisiae (strain ATCC 204508 / S288c) (Baker's yeast).